Here is a 61-residue protein sequence, read N- to C-terminus: Large ribosomal subunit protein bL32 (61 aa).

Residues 1–22 form a disordered region; that stretch reads MAVPKQKSSKSRGRKRRTHQKV. Residues 7 to 20 are compositionally biased toward basic residues; the sequence is KSSKSRGRKRRTHQ.

This sequence belongs to the bacterial ribosomal protein bL32 family.

The polypeptide is Large ribosomal subunit protein bL32 (Desulforapulum autotrophicum (strain ATCC 43914 / DSM 3382 / VKM B-1955 / HRM2) (Desulfobacterium autotrophicum)).